Here is a 346-residue protein sequence, read N- to C-terminus: Small ribosomal subunit biogenesis GTPase RsgA (346 aa).

The segment at 1–26 (MAKRKLTQNQTRRIQSNNAKTLHRHK) is disordered. Polar residues predominate over residues 7–20 (TQNQTRRIQSNNAK). A CP-type G domain is found at 103 to 271 (ENEISRPDYY…LIDSPGIREF (169 aa)). GTP-binding positions include 159–162 (NKVD) and 213–221 (GQSGVGKSS). Residues Cys-295, Cys-300, His-302, and Cys-308 each coordinate Zn(2+).

It belongs to the TRAFAC class YlqF/YawG GTPase family. RsgA subfamily. Monomer. Associates with 30S ribosomal subunit, binds 16S rRNA. The cofactor is Zn(2+).

It localises to the cytoplasm. Its function is as follows. One of several proteins that assist in the late maturation steps of the functional core of the 30S ribosomal subunit. Helps release RbfA from mature subunits. May play a role in the assembly of ribosomal proteins into the subunit. Circularly permuted GTPase that catalyzes slow GTP hydrolysis, GTPase activity is stimulated by the 30S ribosomal subunit. The sequence is that of Small ribosomal subunit biogenesis GTPase RsgA from Haemophilus influenzae (strain 86-028NP).